We begin with the raw amino-acid sequence, 331 residues long: tRNA-cytidine(32) 2-sulfurtransferase (331 aa).

Positions 1–33 (MNAPHMNDTAADAATLDDAAAPAGRPALTRREQ) are disordered. Residues 8-23 (DTAADAATLDDAAAPA) are compositionally biased toward low complexity. The PP-loop motif motif lies at 71–76 (SGGKDS). 3 residues coordinate [4Fe-4S] cluster: C146, C149, and C237.

The protein belongs to the TtcA family. Homodimer. Mg(2+) serves as cofactor. [4Fe-4S] cluster is required as a cofactor.

Its subcellular location is the cytoplasm. It carries out the reaction cytidine(32) in tRNA + S-sulfanyl-L-cysteinyl-[cysteine desulfurase] + AH2 + ATP = 2-thiocytidine(32) in tRNA + L-cysteinyl-[cysteine desulfurase] + A + AMP + diphosphate + H(+). The protein operates within tRNA modification. Functionally, catalyzes the ATP-dependent 2-thiolation of cytidine in position 32 of tRNA, to form 2-thiocytidine (s(2)C32). The sulfur atoms are provided by the cysteine/cysteine desulfurase (IscS) system. In Burkholderia orbicola (strain MC0-3), this protein is tRNA-cytidine(32) 2-sulfurtransferase.